A 605-amino-acid polypeptide reads, in one-letter code: Isocitrate dehydrogenase kinase/phosphatase (605 aa).

ATP-binding positions include 327 to 333 (APGIKGL) and K348. Residue D383 is part of the active site.

The protein belongs to the AceK family.

Its subcellular location is the cytoplasm. It catalyses the reaction L-seryl-[isocitrate dehydrogenase] + ATP = O-phospho-L-seryl-[isocitrate dehydrogenase] + ADP + H(+). In terms of biological role, bifunctional enzyme which can phosphorylate or dephosphorylate isocitrate dehydrogenase (IDH) on a specific serine residue. This is a regulatory mechanism which enables bacteria to bypass the Krebs cycle via the glyoxylate shunt in response to the source of carbon. When bacteria are grown on glucose, IDH is fully active and unphosphorylated, but when grown on acetate or ethanol, the activity of IDH declines drastically concomitant with its phosphorylation. The sequence is that of Isocitrate dehydrogenase kinase/phosphatase from Burkholderia lata (strain ATCC 17760 / DSM 23089 / LMG 22485 / NCIMB 9086 / R18194 / 383).